We begin with the raw amino-acid sequence, 341 residues long: S-adenosylmethionine:tRNA ribosyltransferase-isomerase (341 aa).

The protein belongs to the QueA family. As to quaternary structure, monomer.

Its subcellular location is the cytoplasm. It carries out the reaction 7-aminomethyl-7-carbaguanosine(34) in tRNA + S-adenosyl-L-methionine = epoxyqueuosine(34) in tRNA + adenine + L-methionine + 2 H(+). The protein operates within tRNA modification; tRNA-queuosine biosynthesis. Its function is as follows. Transfers and isomerizes the ribose moiety from AdoMet to the 7-aminomethyl group of 7-deazaguanine (preQ1-tRNA) to give epoxyqueuosine (oQ-tRNA). The polypeptide is S-adenosylmethionine:tRNA ribosyltransferase-isomerase (Staphylococcus aureus (strain USA300)).